The chain runs to 360 residues: Photosystem II protein D1 (360 aa).

The next 3 helical transmembrane spans lie at 29 to 46 (YIGWFGVLMIPTLLTATS), 118 to 133 (HFLTGVACYIGREWEL), and 142 to 156 (WISVAFTAPVAAAAA). Residue His-118 coordinates chlorophyll a. Tyr-126 contacts pheophytin a. Residues Asp-170 and Glu-189 each coordinate [CaMn4O5] cluster. Residues 197–218 (FHQLGVAGVFGGSLFSAMHGSL) form a helical membrane-spanning segment. His-198 is a binding site for chlorophyll a. Residues His-215 and 264 to 265 (SF) each bind a quinone. Residue His-215 participates in Fe cation binding. Position 272 (His-272) interacts with Fe cation. The chain crosses the membrane as a helical span at residues 274–288 (FLGLWPVVGIWLTAL). [CaMn4O5] cluster contacts are provided by His-332, Glu-333, Asp-342, and Ala-344. Residues 345-360 (SGESLPVALTAPAVNG) constitute a propeptide that is removed on maturation.

Belongs to the reaction center PufL/M/PsbA/D family. In terms of assembly, PSII is composed of 1 copy each of membrane proteins PsbA, PsbB, PsbC, PsbD, PsbE, PsbF, PsbH, PsbI, PsbJ, PsbK, PsbL, PsbM, PsbT, PsbX, PsbY, PsbZ, Psb30/Ycf12, at least 3 peripheral proteins of the oxygen-evolving complex and a large number of cofactors. It forms dimeric complexes. The D1/D2 heterodimer binds P680, chlorophylls that are the primary electron donor of PSII, and subsequent electron acceptors. It shares a non-heme iron and each subunit binds pheophytin, quinone, additional chlorophylls, carotenoids and lipids. D1 provides most of the ligands for the Mn4-Ca-O5 cluster of the oxygen-evolving complex (OEC). There is also a Cl(-1) ion associated with D1 and D2, which is required for oxygen evolution. The PSII complex binds additional chlorophylls, carotenoids and specific lipids. is required as a cofactor. In terms of processing, tyr-161 forms a radical intermediate that is referred to as redox-active TyrZ, YZ or Y-Z. Post-translationally, C-terminally processed by CTPA; processing is essential to allow assembly of the oxygen-evolving complex and thus photosynthetic growth.

Its subcellular location is the plastid. The protein resides in the chloroplast thylakoid membrane. The catalysed reaction is 2 a plastoquinone + 4 hnu + 2 H2O = 2 a plastoquinol + O2. In terms of biological role, photosystem II (PSII) is a light-driven water:plastoquinone oxidoreductase that uses light energy to abstract electrons from H(2)O, generating O(2) and a proton gradient subsequently used for ATP formation. It consists of a core antenna complex that captures photons, and an electron transfer chain that converts photonic excitation into a charge separation. The D1/D2 (PsbA/PsbD) reaction center heterodimer binds P680, the primary electron donor of PSII as well as several subsequent electron acceptors. This is Photosystem II protein D1 from Pyropia yezoensis (Susabi-nori).